The chain runs to 123 residues: uncharacterized protein (123 aa).

The next 2 membrane-spanning stretches (helical) occupy residues 1–21 and 103–123; these read MVLP…AVGC and LESS…ILLF.

Its subcellular location is the membrane. This is an uncharacterized protein from Saccharomyces cerevisiae (strain ATCC 204508 / S288c) (Baker's yeast).